The sequence spans 150 residues: Glycine cleavage system H-like protein gcvH2 (150 aa).

The 83-residue stretch at 44-126 folds into the Lipoyl-binding domain; that stretch reads VATVGLSSFG…PANNWMVKFK (83 aa).

The protein belongs to the GcvH family.

The chain is Glycine cleavage system H-like protein gcvH2 (gcvH2) from Dictyostelium discoideum (Social amoeba).